The sequence spans 108 residues: UPF0060 membrane protein YnfA (108 aa).

At 1 to 5 (MIKTT) the chain is on the periplasmic side. A helical transmembrane segment spans residues 6 to 26 (LLFFATALCEIIGCFLPWLWL). Topologically, residues 27-30 (KRNA) are cytoplasmic. The helical transmembrane segment at 31-51 (SIWLLLPAGISLALFVWLLTL) threads the bilayer. Residues 52–60 (HPAASGRVY) are Periplasmic-facing. The chain crosses the membrane as a helical span at residues 61–81 (AAYGGVYVCTALMWLRVVDGV). Residues 82–84 (KLT) are Cytoplasmic-facing. Residues 85–105 (LYDWTGALIALCGMLIIVAGW) form a helical membrane-spanning segment. The Periplasmic segment spans residues 106 to 108 (GRT).

This sequence belongs to the UPF0060 family.

Its subcellular location is the cell inner membrane. This is UPF0060 membrane protein YnfA from Escherichia coli O139:H28 (strain E24377A / ETEC).